The following is a 230-amino-acid chain: PsbP-like protein 1, chloroplastic (230 aa).

It belongs to the PsbP family.

It localises to the plastid. Its subcellular location is the chloroplast thylakoid lumen. Required for efficient repair of photodamaged PSII, but not tightly associated with the complex. The sequence is that of PsbP-like protein 1, chloroplastic (PPL1) from Arabidopsis thaliana (Mouse-ear cress).